The chain runs to 239 residues: tRNA (guanine-N(1)-)-methyltransferase (239 aa).

S-adenosyl-L-methionine contacts are provided by residues G109 and 128 to 133 (IGDYVL).

It belongs to the RNA methyltransferase TrmD family. Homodimer.

The protein resides in the cytoplasm. The enzyme catalyses guanosine(37) in tRNA + S-adenosyl-L-methionine = N(1)-methylguanosine(37) in tRNA + S-adenosyl-L-homocysteine + H(+). In terms of biological role, specifically methylates guanosine-37 in various tRNAs. This Thermus thermophilus (strain ATCC 27634 / DSM 579 / HB8) protein is tRNA (guanine-N(1)-)-methyltransferase.